We begin with the raw amino-acid sequence, 130 residues long: Small ribosomal subunit protein uS9 (130 aa).

This sequence belongs to the universal ribosomal protein uS9 family.

In Pseudomonas aeruginosa (strain LESB58), this protein is Small ribosomal subunit protein uS9.